Consider the following 589-residue polypeptide: Probable translation initiation factor IF-2 (589 aa).

One can recognise a tr-type G domain in the interval 14–231 (LRQPIVCVLG…GLAQRFLESE (218 aa)). The interval 23–30 (GHVDHGKT) is G1. 23 to 30 (GHVDHGKT) is a binding site for GTP. A G2 region spans residues 48 to 52 (GITQR). The segment at 84 to 87 (DTPG) is G3. GTP-binding positions include 84-88 (DTPGH) and 138-141 (NKID). Positions 138–141 (NKID) are G4. Residues 206-208 (SAK) form a G5 region.

Belongs to the TRAFAC class translation factor GTPase superfamily. Classic translation factor GTPase family. IF-2 subfamily.

Function in general translation initiation by promoting the binding of the formylmethionine-tRNA to ribosomes. Seems to function along with eIF-2. In Thermoplasma volcanium (strain ATCC 51530 / DSM 4299 / JCM 9571 / NBRC 15438 / GSS1), this protein is Probable translation initiation factor IF-2.